The following is a 93-amino-acid chain: Small ribosomal subunit protein uS19c (93 aa).

The protein belongs to the universal ribosomal protein uS19 family.

It localises to the plastid. The protein localises to the chloroplast. In terms of biological role, protein S19 forms a complex with S13 that binds strongly to the 16S ribosomal RNA. The sequence is that of Small ribosomal subunit protein uS19c from Stigeoclonium helveticum (Green alga).